The sequence spans 456 residues: UDP-N-acetylmuramate--L-alanine ligase (456 aa).

114–120 is an ATP binding site; it reads GTHGKTT.

It belongs to the MurCDEF family.

The protein resides in the cytoplasm. It carries out the reaction UDP-N-acetyl-alpha-D-muramate + L-alanine + ATP = UDP-N-acetyl-alpha-D-muramoyl-L-alanine + ADP + phosphate + H(+). Its pathway is cell wall biogenesis; peptidoglycan biosynthesis. Cell wall formation. The protein is UDP-N-acetylmuramate--L-alanine ligase of Porphyromonas gingivalis (strain ATCC 33277 / DSM 20709 / CIP 103683 / JCM 12257 / NCTC 11834 / 2561).